A 715-amino-acid polypeptide reads, in one-letter code: Dipeptidyl-peptidase 7 (715 aa).

Residues 1 to 22 (MRKLIFSLVTSFFLLLPSVIRA) form the signal peptide. Catalysis depends on charge relay system residues His-87, Asp-223, and Ser-650.

Belongs to the peptidase S46 family.

In terms of biological role, catalyzes the removal of dipeptides from the N-terminus of oligopeptides. Most potently cleaves the synthetic substrate Met-Leu-methylcoumaryl-7-amide (Met-Leu-MCA), followed by Lys-Ala-, Leu-Arg- &gt; Leu-Asp-, Leu-Glu-, &gt;Leu-Lys, and &gt;Val-Arg-MCA, while this enzyme does not hydrolyze Gly-Arg-, Gly-Gly-, Lys-Lys-, or Gly-Pro-MCA. In Capnocytophaga gingivalis, this protein is Dipeptidyl-peptidase 7 (dpp7).